The sequence spans 270 residues: FKBP-type peptidyl-prolyl cis-trans isomerase FkpA (270 aa).

The first 25 residues, 1–25, serve as a signal peptide directing secretion; it reads MKSLFKVTLLATTMAVALHAPITFA. Positions 164-249 constitute a PPIase FKBP-type domain; it reads SDTVVVNYKG…VFDVELLDVK (86 aa).

Belongs to the FKBP-type PPIase family.

The protein resides in the periplasm. The enzyme catalyses [protein]-peptidylproline (omega=180) = [protein]-peptidylproline (omega=0). PPIases accelerate the folding of proteins. It catalyzes the cis-trans isomerization of proline imidic peptide bonds in oligopeptides. The sequence is that of FKBP-type peptidyl-prolyl cis-trans isomerase FkpA (fkpA) from Escherichia coli (strain K12).